The following is a 115-amino-acid chain: Large ribosomal subunit protein bL19 (115 aa).

This sequence belongs to the bacterial ribosomal protein bL19 family.

This protein is located at the 30S-50S ribosomal subunit interface and may play a role in the structure and function of the aminoacyl-tRNA binding site. The protein is Large ribosomal subunit protein bL19 of Kosmotoga olearia (strain ATCC BAA-1733 / DSM 21960 / TBF 19.5.1).